Here is a 708-residue protein sequence, read N- to C-terminus: Elongation factor G (708 aa).

Residues 9–289 form the tr-type G domain; the sequence is MFTRNIGIMA…AVCAFLPSPE (281 aa). GTP contacts are provided by residues 18-25, 86-90, and 140-143; these read AHIDAGKT, DTPGH, and NKMD.

It belongs to the TRAFAC class translation factor GTPase superfamily. Classic translation factor GTPase family. EF-G/EF-2 subfamily.

The protein resides in the cytoplasm. Its function is as follows. Catalyzes the GTP-dependent ribosomal translocation step during translation elongation. During this step, the ribosome changes from the pre-translocational (PRE) to the post-translocational (POST) state as the newly formed A-site-bound peptidyl-tRNA and P-site-bound deacylated tRNA move to the P and E sites, respectively. Catalyzes the coordinated movement of the two tRNA molecules, the mRNA and conformational changes in the ribosome. This Parabacteroides distasonis (strain ATCC 8503 / DSM 20701 / CIP 104284 / JCM 5825 / NCTC 11152) protein is Elongation factor G.